We begin with the raw amino-acid sequence, 323 residues long: tRNA U34 carboxymethyltransferase (323 aa).

Carboxy-S-adenosyl-L-methionine-binding positions include lysine 91, tryptophan 105, lysine 110, glycine 130, 152 to 154 (DPT), 181 to 182 (IE), methionine 196, tyrosine 200, and arginine 315.

The protein belongs to the class I-like SAM-binding methyltransferase superfamily. CmoB family. As to quaternary structure, homotetramer.

It carries out the reaction carboxy-S-adenosyl-L-methionine + 5-hydroxyuridine(34) in tRNA = 5-carboxymethoxyuridine(34) in tRNA + S-adenosyl-L-homocysteine + H(+). Catalyzes carboxymethyl transfer from carboxy-S-adenosyl-L-methionine (Cx-SAM) to 5-hydroxyuridine (ho5U) to form 5-carboxymethoxyuridine (cmo5U) at position 34 in tRNAs. This chain is tRNA U34 carboxymethyltransferase, found in Escherichia coli O139:H28 (strain E24377A / ETEC).